We begin with the raw amino-acid sequence, 639 residues long: Sec1 family domain-containing protein 1 (639 aa).

Residues Ser-34, Ser-300, and Ser-525 each carry the phosphoserine modification.

This sequence belongs to the STXBP/unc-18/SEC1 family. Interacts with STX17. Interacts with STX5A. Interacts with the COG complex via COG4.

It is found in the cytoplasm. It localises to the endoplasmic reticulum membrane. The protein resides in the golgi apparatus. The protein localises to the golgi stack membrane. Its function is as follows. Plays a role in SNARE-pin assembly and Golgi-to-ER retrograde transport via its interaction with COG4. Involved in vesicular transport between the endoplasmic reticulum and the Golgi. This chain is Sec1 family domain-containing protein 1 (Scfd1), found in Mus musculus (Mouse).